Reading from the N-terminus, the 484-residue chain is HSPB1-associated protein 1 (484 aa).

Positions 1–26 (MAARPGAITNADSASGGGEEEGKHVK) are disordered. The interval 88-208 (ETACNYVEAT…EDTPFLYPTR (121 aa)) is interaction with HSPB1. The region spanning 124-288 (WAYADYKYFV…HQTRVEEAIT (165 aa)) is the JmjC domain. A disordered region spans residues 396 to 429 (TPSSEEPSSERGGIFENDGEDFVSKNGKSFGKRQ).

Interacts with CRYAB and HSPB1.

It is found in the cytoplasm. Functionally, may play a role in cellular stress response. The protein is HSPB1-associated protein 1 (HSPBAP1) of Bos taurus (Bovine).